We begin with the raw amino-acid sequence, 326 residues long: tRNA-modifying protein YgfZ (326 aa).

Residues W27 and W189 each coordinate folate.

The protein belongs to the tRNA-modifying YgfZ family.

The protein localises to the cytoplasm. Folate-binding protein involved in regulating the level of ATP-DnaA and in the modification of some tRNAs. It is probably a key factor in regulatory networks that act via tRNA modification, such as initiation of chromosomal replication. The sequence is that of tRNA-modifying protein YgfZ from Escherichia fergusonii (strain ATCC 35469 / DSM 13698 / CCUG 18766 / IAM 14443 / JCM 21226 / LMG 7866 / NBRC 102419 / NCTC 12128 / CDC 0568-73).